Reading from the N-terminus, the 111-residue chain is UPF0339 protein in ptx operon 5'region (111 aa).

2 consecutive repeat copies span residues 10 to 58 and 61 to 109.

This sequence belongs to the UPF0339 family. Duplicated subfamily.

This Stutzerimonas stutzeri (Pseudomonas stutzeri) protein is UPF0339 protein in ptx operon 5'region.